The sequence spans 232 residues: Ribose-5-phosphate isomerase A (232 aa).

Substrate-binding positions include 28–31 (TGST), 83–86 (DGAD), and 96–99 (KGGG). The active-site Proton acceptor is the Glu105. A substrate-binding site is contributed by Lys123.

Belongs to the ribose 5-phosphate isomerase family. As to quaternary structure, homodimer.

The enzyme catalyses aldehydo-D-ribose 5-phosphate = D-ribulose 5-phosphate. It participates in carbohydrate degradation; pentose phosphate pathway; D-ribose 5-phosphate from D-ribulose 5-phosphate (non-oxidative stage): step 1/1. Functionally, catalyzes the reversible conversion of ribose-5-phosphate to ribulose 5-phosphate. This chain is Ribose-5-phosphate isomerase A, found in Rhodopseudomonas palustris (strain BisB5).